The sequence spans 47 residues: Ribosome-inactivating protein luffin P1 (47 aa).

Intrachain disulfides connect Cys12–Cys33 and Cys16–Cys29.

Homotetramer.

The enzyme catalyses Endohydrolysis of the N-glycosidic bond at one specific adenosine on the 28S rRNA.. In terms of biological role, inhibits protein synthesis in animal cells. In Luffa aegyptiaca (Sponge gourd), this protein is Ribosome-inactivating protein luffin P1.